We begin with the raw amino-acid sequence, 383 residues long: GA-binding protein subunit beta-1 (383 aa).

Serine 2 bears the N-acetylserine mark. ANK repeat units follow at residues 5–34 (DLGK…PFTT) and 37–66 (LGTS…SRDA). An N6-acetyllysine modification is found at lysine 69. 3 ANK repeats span residues 70–99 (VDRT…DVNA), 103–132 (LKMT…DVHT), and 136–166 (FCKT…QINT). N6-acetyllysine is present on residues lysine 340 and lysine 369.

As to quaternary structure, heterotetramer of two alpha and two beta subunits. Interacts with HCFC1, causing repression of transcriptional activity. Post-translationally, acetylated by EP300/p300. Deacetylated by SIRT7, promoting heterotetramerization and activity.

Its subcellular location is the nucleus. Its function is as follows. Transcription factor capable of interacting with purine rich repeats (GA repeats). Acts as a master regulator of nuclear-encoded mitochondrial genes. This chain is GA-binding protein subunit beta-1 (GABPB1), found in Bos taurus (Bovine).